We begin with the raw amino-acid sequence, 246 residues long: Probable transcriptional regulatory protein WD_0484 (246 aa).

Residues 1 to 22 (MAGHSQFSNIKHRKGAQDAKRS) form a disordered region.

Belongs to the TACO1 family.

Its subcellular location is the cytoplasm. This chain is Probable transcriptional regulatory protein WD_0484, found in Wolbachia pipientis wMel.